The primary structure comprises 267 residues: GTP cyclohydrolase FolE2 (267 aa).

Belongs to the GTP cyclohydrolase IV family.

The catalysed reaction is GTP + H2O = 7,8-dihydroneopterin 3'-triphosphate + formate + H(+). It participates in cofactor biosynthesis; 7,8-dihydroneopterin triphosphate biosynthesis; 7,8-dihydroneopterin triphosphate from GTP: step 1/1. In terms of biological role, converts GTP to 7,8-dihydroneopterin triphosphate. The protein is GTP cyclohydrolase FolE2 of Citrifermentans bemidjiense (strain ATCC BAA-1014 / DSM 16622 / JCM 12645 / Bem) (Geobacter bemidjiensis).